Consider the following 501-residue polypeptide: Fumarate reductase 2 (501 aa).

A mitochondrion-targeting transit peptide spans 1–32 (MIRSVRRVFIYVSIFVLIIVLKRTLSGTDQTS). 37 to 51 (VVVIGSGLAGLTTSN) is a binding site for FAD. Residues H281 and R304 contribute to the active site.

It belongs to the FAD-dependent oxidoreductase 2 family. FRD/SDH subfamily. Requires FAD as cofactor.

The protein resides in the mitochondrion. It carries out the reaction succinate + NAD(+) = fumarate + NADH + H(+). Irreversibly catalyzes the reduction of fumarate to succinate. Together with the second isozyme of soluble fumarate reductase (FRD1), essential for anaerobic growth. Involved in maintaining redox balance during oxygen deficiency conditions. Reduction of fumarate is the main source of succinate during fermentation, and under anaerobic conditions, the formation of succinate is strictly required for the reoxidation of FADH(2). The chain is Fumarate reductase 2 (OSM1) from Saccharomyces cerevisiae (strain ATCC 204508 / S288c) (Baker's yeast).